Reading from the N-terminus, the 184-residue chain is Cyclin-dependent kinase inhibitor 1 (184 aa).

A compositionally biased stretch (low complexity) spans 85 to 98 (ISSTTLTPLSSPST). The tract at residues 85–184 (ISSTTLTPLS…IRTRSSCSPY (100 aa)) is disordered.

Belongs to the CDI family. As to quaternary structure, interacts with cyd-1; the interaction is direct. In terms of tissue distribution, in embryos, expression is first seen in pharyngeal primordium and later in all differentiating cells. Post embryonic expression corresponds to developmental patterns of cell cycle progression in many tissues including sex myoblasts, distal tip cells, vulval cells, seam cells, neurons, intestine cells and hypodermal cells.

It localises to the nucleus. Its function is as follows. Negative cell-cycle regulator that functions at the G1-to-S-phase transition. Required for suspension of the cell cycle in dauer larvae and starved L1 larvae. In vulval precursor cells (VPCs), a pathway of heterochronic genes acts via cki-1 to maintain VPCs in G1 during the L2 larval stage. Cul-2 may function in ubiquitin-mediated degradation by targeting cki-1 for degradation. Involved in distal tip cell development by repressing and modulating cye-1/cdk-2 activity levels in Z1.aa/Z4.pp and in Z1.ap/Z4.pa. The protein is Cyclin-dependent kinase inhibitor 1 of Caenorhabditis elegans.